A 314-amino-acid chain; its full sequence is Methionyl-tRNA formyltransferase (314 aa).

110 to 113 (SLLP) is a binding site for (6S)-5,6,7,8-tetrahydrofolate.

The protein belongs to the Fmt family.

The catalysed reaction is L-methionyl-tRNA(fMet) + (6R)-10-formyltetrahydrofolate = N-formyl-L-methionyl-tRNA(fMet) + (6S)-5,6,7,8-tetrahydrofolate + H(+). In terms of biological role, attaches a formyl group to the free amino group of methionyl-tRNA(fMet). The formyl group appears to play a dual role in the initiator identity of N-formylmethionyl-tRNA by promoting its recognition by IF2 and preventing the misappropriation of this tRNA by the elongation apparatus. This is Methionyl-tRNA formyltransferase from Bacillus mycoides (strain KBAB4) (Bacillus weihenstephanensis).